Reading from the N-terminus, the 408-residue chain is Serine/threonine transporter SstT (408 aa).

A run of 9 helical transmembrane segments spans residues 11–31 (LANG…VALA), 43–63 (FLGS…VFIL), 82–102 (IVVL…ILSM), 141–161 (ALMT…GLAL), 192–212 (IGIF…AIAG), 216–236 (LLAV…PLIV), 290–310 (IPLG…VLTL), 316–336 (LGIQ…AISA), and 363–383 (VAMQ…AAET).

Belongs to the dicarboxylate/amino acid:cation symporter (DAACS) (TC 2.A.23) family.

It localises to the cell inner membrane. The catalysed reaction is L-serine(in) + Na(+)(in) = L-serine(out) + Na(+)(out). The enzyme catalyses L-threonine(in) + Na(+)(in) = L-threonine(out) + Na(+)(out). Involved in the import of serine and threonine into the cell, with the concomitant import of sodium (symport system). In Shewanella oneidensis (strain ATCC 700550 / JCM 31522 / CIP 106686 / LMG 19005 / NCIMB 14063 / MR-1), this protein is Serine/threonine transporter SstT.